A 572-amino-acid polypeptide reads, in one-letter code: Proline--tRNA ligase (572 aa).

It belongs to the class-II aminoacyl-tRNA synthetase family. ProS type 1 subfamily. As to quaternary structure, homodimer.

The protein localises to the cytoplasm. The enzyme catalyses tRNA(Pro) + L-proline + ATP = L-prolyl-tRNA(Pro) + AMP + diphosphate. Catalyzes the attachment of proline to tRNA(Pro) in a two-step reaction: proline is first activated by ATP to form Pro-AMP and then transferred to the acceptor end of tRNA(Pro). As ProRS can inadvertently accommodate and process non-cognate amino acids such as alanine and cysteine, to avoid such errors it has two additional distinct editing activities against alanine. One activity is designated as 'pretransfer' editing and involves the tRNA(Pro)-independent hydrolysis of activated Ala-AMP. The other activity is designated 'posttransfer' editing and involves deacylation of mischarged Ala-tRNA(Pro). The misacylated Cys-tRNA(Pro) is not edited by ProRS. This is Proline--tRNA ligase from Salmonella schwarzengrund (strain CVM19633).